Reading from the N-terminus, the 821-residue chain is Phenylalanine--tRNA ligase beta subunit (821 aa).

One can recognise a tRNA-binding domain in the interval 39–149 (RTWAEGVVVG…DAVTVGEDVR (111 aa)). Positions 409 to 503 (PLERTLTLRL…RLYGYDRFEE (95 aa)) constitute a B5 domain. Mg(2+)-binding residues include D481, D487, E490, and E491. One can recognise an FDX-ACB domain in the interval 724 to 820 (STYPASDRDL…LVEKYAVTLR (97 aa)).

Belongs to the phenylalanyl-tRNA synthetase beta subunit family. Type 1 subfamily. In terms of assembly, tetramer of two alpha and two beta subunits. Mg(2+) serves as cofactor.

Its subcellular location is the cytoplasm. It carries out the reaction tRNA(Phe) + L-phenylalanine + ATP = L-phenylalanyl-tRNA(Phe) + AMP + diphosphate + H(+). The polypeptide is Phenylalanine--tRNA ligase beta subunit (Thermosynechococcus vestitus (strain NIES-2133 / IAM M-273 / BP-1)).